Reading from the N-terminus, the 274-residue chain is Sulfur carrier protein FdhD (274 aa).

Residue Cys-121 is the Cysteine persulfide intermediate of the active site. 258–263 lines the Mo-bis(molybdopterin guanine dinucleotide) pocket; the sequence is FSKPGR.

It belongs to the FdhD family.

Its subcellular location is the cytoplasm. In terms of biological role, required for formate dehydrogenase (FDH) activity. Acts as a sulfur carrier protein that transfers sulfur from IscS to the molybdenum cofactor prior to its insertion into FDH. This chain is Sulfur carrier protein FdhD, found in Yersinia pestis bv. Antiqua (strain Antiqua).